We begin with the raw amino-acid sequence, 1257 residues long: Elongation factor 2 (1257 aa).

In terms of domain architecture, DOD-type homing endonuclease spans 273–402; the sequence is LAGLMFGDGC…LQLLLQKFDV (130 aa). Positions 541 to 782 constitute a tr-type G domain; it reads VEEHHNFAAE…MVVKHLPDPV (242 aa). Residues 616–620 and 670–673 contribute to the GTP site; these read DTPGH and NKVD. His1120 bears the Diphthamide mark. Residues 1237–1250 are compositionally biased toward basic and acidic residues; that stretch reads ERKGLKPEPPKPED. Residues 1237 to 1257 are disordered; it reads ERKGLKPEPPKPEDYIEDYGG.

It belongs to the TRAFAC class translation factor GTPase superfamily. Classic translation factor GTPase family. EF-G/EF-2 subfamily. This protein undergoes a protein self splicing that involves a post-translational excision of the intervening region (intein) followed by peptide ligation.

The protein localises to the cytoplasm. Catalyzes the GTP-dependent ribosomal translocation step during translation elongation. During this step, the ribosome changes from the pre-translocational (PRE) to the post-translocational (POST) state as the newly formed A-site-bound peptidyl-tRNA and P-site-bound deacylated tRNA move to the P and E sites, respectively. Catalyzes the coordinated movement of the two tRNA molecules, the mRNA and conformational changes in the ribosome. This chain is Elongation factor 2, found in Methanopyrus kandleri (strain AV19 / DSM 6324 / JCM 9639 / NBRC 100938).